Reading from the N-terminus, the 258-residue chain is Phosphate import ATP-binding protein PstB (258 aa).

Residues 5-247 form the ABC transporter domain; sequence IETKDLDIYY…ERIFSNPKEK (243 aa). Residue 37–44 coordinates ATP; it reads GPSGCGKS.

It belongs to the ABC transporter superfamily. Phosphate importer (TC 3.A.1.7) family. As to quaternary structure, the complex is composed of two ATP-binding proteins (PstB), two transmembrane proteins (PstC and PstA) and a solute-binding protein (PstS).

It is found in the cell membrane. The enzyme catalyses phosphate(out) + ATP + H2O = ADP + 2 phosphate(in) + H(+). Functionally, part of the ABC transporter complex PstSACB involved in phosphate import. Responsible for energy coupling to the transport system. This Cutibacterium acnes (strain DSM 16379 / KPA171202) (Propionibacterium acnes) protein is Phosphate import ATP-binding protein PstB.